Consider the following 395-residue polypeptide: Imidazolonepropionase (395 aa).

Fe(3+)-binding residues include His63 and His65. 2 residues coordinate Zn(2+): His63 and His65. 3 residues coordinate 4-imidazolone-5-propanoate: Arg72, Tyr135, and His168. Tyr135 is a binding site for N-formimidoyl-L-glutamate. His233 serves as a coordination point for Fe(3+). His233 is a binding site for Zn(2+). Gln236 serves as a coordination point for 4-imidazolone-5-propanoate. Asp308 is a binding site for Fe(3+). Asp308 contacts Zn(2+). N-formimidoyl-L-glutamate is bound by residues Asn310 and Gly312. Thr313 serves as a coordination point for 4-imidazolone-5-propanoate.

It belongs to the metallo-dependent hydrolases superfamily. HutI family. The cofactor is Zn(2+). Fe(3+) is required as a cofactor.

It localises to the cytoplasm. It catalyses the reaction 4-imidazolone-5-propanoate + H2O = N-formimidoyl-L-glutamate. It participates in amino-acid degradation; L-histidine degradation into L-glutamate; N-formimidoyl-L-glutamate from L-histidine: step 3/3. Its function is as follows. Catalyzes the hydrolytic cleavage of the carbon-nitrogen bond in imidazolone-5-propanoate to yield N-formimidoyl-L-glutamate. It is the third step in the universal histidine degradation pathway. The polypeptide is Imidazolonepropionase (Cereibacter sphaeroides (strain KD131 / KCTC 12085) (Rhodobacter sphaeroides)).